Consider the following 747-residue polypeptide: Fatty acid oxidation complex subunit alpha (747 aa).

An enoyl-CoA hydratase region spans residues 1 to 197; that stretch reads MGASATNSVT…KMGLVDDVVP (197 aa). The tract at residues 313 to 747 is 3-hydroxyacyl-CoA dehydrogenase; it reads RAIHRVGVLG…NIDEVTDVAS (435 aa). The segment at 590–614 is disordered; that stretch reads YLYSNPTKNSSPTKNGNSPAKRNSF. The segment covering 593–610 has biased composition (polar residues); sequence SNPTKNSSPTKNGNSPAK.

The protein in the N-terminal section; belongs to the enoyl-CoA hydratase/isomerase family. In the central section; belongs to the 3-hydroxyacyl-CoA dehydrogenase family. In terms of assembly, heterotetramer of two alpha chains (FadJ) and two beta chains (FadI).

The protein resides in the cytoplasm. It carries out the reaction a (3S)-3-hydroxyacyl-CoA = a (2E)-enoyl-CoA + H2O. The catalysed reaction is a 4-saturated-(3S)-3-hydroxyacyl-CoA = a (3E)-enoyl-CoA + H2O. It catalyses the reaction a (3S)-3-hydroxyacyl-CoA + NAD(+) = a 3-oxoacyl-CoA + NADH + H(+). The enzyme catalyses (3S)-3-hydroxybutanoyl-CoA = (3R)-3-hydroxybutanoyl-CoA. It functions in the pathway lipid metabolism; fatty acid beta-oxidation. Catalyzes the formation of a hydroxyacyl-CoA by addition of water on enoyl-CoA. Also exhibits 3-hydroxyacyl-CoA epimerase and 3-hydroxyacyl-CoA dehydrogenase activities. This chain is Fatty acid oxidation complex subunit alpha, found in Yersinia pseudotuberculosis serotype O:1b (strain IP 31758).